A 229-amino-acid polypeptide reads, in one-letter code: ACD11 homolog protein (229 aa).

Positions 84, 88, 123, 127, and 166 each coordinate an N-acylsphingoid base 1-phosphate.

The protein belongs to the GLTP family.

This is ACD11 homolog protein from Arabidopsis thaliana (Mouse-ear cress).